The sequence spans 187 residues: Cerebral dopamine neurotrophic factor (187 aa).

The N-terminal stretch at 1 to 24 (MRCTSPAALVTFCAGLWISNHVLA) is a signal peptide. 3 disulfide bridges follow: cysteine 37/cysteine 124, cysteine 40/cysteine 113, and cysteine 71/cysteine 82.

The protein belongs to the ARMET family.

Its subcellular location is the secreted. In terms of biological role, trophic factor for dopamine neurons. Prevents the 6-hydroxydopamine (6-OHDA)-induced degeneration of dopaminergic neurons. When administered after 6-OHDA-lesioning, restores the dopaminergic function and prevents the degeneration of dopaminergic neurons in substantia nigra. This is Cerebral dopamine neurotrophic factor (Cdnf) from Rattus norvegicus (Rat).